The sequence spans 194 residues: uncharacterized protein (194 aa).

This is an uncharacterized protein from Ostreid herpesvirus 1 (isolate France) (OsHV-1).